Reading from the N-terminus, the 303-residue chain is 5'-3' exonuclease (303 aa).

Residues 179-262 (ISPAQWVDVK…LATITTEIEA (84 aa)) enclose the 5'-3' exonuclease domain.

In terms of biological role, 5'-3' exonuclease acting preferentially on double-stranded DNA. The protein is 5'-3' exonuclease of Halalkalibacterium halodurans (strain ATCC BAA-125 / DSM 18197 / FERM 7344 / JCM 9153 / C-125) (Bacillus halodurans).